A 658-amino-acid polypeptide reads, in one-letter code: MLFSRSPFRLCRISAVGQTRQLPFSRPRFLSASVARYAIDMETVNTSERLARLRQLMQEHKVDVYIVPSEDSHQSEYIAPCDGRREFISGFSGSAGTAIVSMTKAALSTDGRYFNQASKQLDSNWLLLKRGVENVPTWQEWTTEQAEGGKVVGVDPSLITAPGARSLAETLRKNGSSLVGVQQNLVDLVWGEDRPAPPREKVRVHPDKFAGKSFQEKITDLRKELENKKTAGFVISMLDEIAWLFNLRGSDIPYNPVFFAYAIITPTTADLYIDEEKLTPEVTSHLGQDVVIKPYDSIFADATALSEARKQDAGEAAAKFLLSNKASWALSLSLGGEEHVEETRSPIADAKAVKNEAELAGMRACHIRDGAALIEYFAWLENELVSKKTSLDEVDAADKLEQIRSKHDLFAGLSFDTISSTGPNGAVIHYKPEKGSCAIIDPEAIYLCDSGAQYLDGTTDVTRTFHFGQPTELEKKAFTLVLKGMIAIDSAVFPKGTSGFALDVLARQFLWKEGLDYLHGTGHGIGSYLNVHEGPIGIGTRVQYTEVPIAPGNVISDEPGFYEDGKFGIRIEICLADVIMAREVQTTHKFGDKPWLGFEHVTMAPIGRNLIEPSLLSESELKWVNDYHAEIWEKTHHFFENDEFTRSWLQRETQPISK.

Mn(2+) is bound by residues D449, D460, E558, and E572.

It belongs to the peptidase M24B family. It depends on Mn(2+) as a cofactor.

The catalysed reaction is Release of any N-terminal amino acid, including proline, that is linked to proline, even from a dipeptide or tripeptide.. In terms of biological role, catalyzes the removal of a penultimate prolyl residue from the N-termini of peptides. The sequence is that of Probable Xaa-Pro aminopeptidase P (ampp) from Aspergillus clavatus (strain ATCC 1007 / CBS 513.65 / DSM 816 / NCTC 3887 / NRRL 1 / QM 1276 / 107).